The chain runs to 508 residues: Photosystem II CP47 reaction center protein (508 aa).

Helical transmembrane passes span Ser21 to Ser36, Ile101 to Trp115, Gly140 to Phe156, Ile203 to Ser218, Val237 to Val252, and Ser457 to Arg472.

Belongs to the PsbB/PsbC family. PsbB subfamily. PSII is composed of 1 copy each of membrane proteins PsbA, PsbB, PsbC, PsbD, PsbE, PsbF, PsbH, PsbI, PsbJ, PsbK, PsbL, PsbM, PsbT, PsbX, PsbY, PsbZ, Psb30/Ycf12, at least 3 peripheral proteins of the oxygen-evolving complex and a large number of cofactors. It forms dimeric complexes. The cofactor is Binds multiple chlorophylls. PSII binds additional chlorophylls, carotenoids and specific lipids..

It localises to the plastid. The protein localises to the chloroplast thylakoid membrane. Functionally, one of the components of the core complex of photosystem II (PSII). It binds chlorophyll and helps catalyze the primary light-induced photochemical processes of PSII. PSII is a light-driven water:plastoquinone oxidoreductase, using light energy to abstract electrons from H(2)O, generating O(2) and a proton gradient subsequently used for ATP formation. This chain is Photosystem II CP47 reaction center protein, found in Lemna minor (Common duckweed).